The chain runs to 382 residues: tRNA-specific 2-thiouridylase MnmA (382 aa).

ATP-binding positions include 18–25 (AMSGGVDS) and leucine 44. Cysteine 112 (nucleophile) is an active-site residue. Cysteine 112 and cysteine 209 form a disulfide bridge. Glycine 136 contacts ATP. The interval 159–161 (RDQ) is interaction with tRNA. Catalysis depends on cysteine 209, which acts as the Cysteine persulfide intermediate.

This sequence belongs to the MnmA/TRMU family.

The protein resides in the cytoplasm. It carries out the reaction S-sulfanyl-L-cysteinyl-[protein] + uridine(34) in tRNA + AH2 + ATP = 2-thiouridine(34) in tRNA + L-cysteinyl-[protein] + A + AMP + diphosphate + H(+). Its function is as follows. Catalyzes the 2-thiolation of uridine at the wobble position (U34) of tRNA, leading to the formation of s(2)U34. The protein is tRNA-specific 2-thiouridylase MnmA of Methylobacterium nodulans (strain LMG 21967 / CNCM I-2342 / ORS 2060).